The primary structure comprises 187 residues: Elongation factor P (187 aa).

It belongs to the elongation factor P family.

It localises to the cytoplasm. It functions in the pathway protein biosynthesis; polypeptide chain elongation. Its function is as follows. Involved in peptide bond synthesis. Stimulates efficient translation and peptide-bond synthesis on native or reconstituted 70S ribosomes in vitro. Probably functions indirectly by altering the affinity of the ribosome for aminoacyl-tRNA, thus increasing their reactivity as acceptors for peptidyl transferase. The polypeptide is Elongation factor P (Helicobacter pylori (strain G27)).